The primary structure comprises 150 residues: Large ribosomal subunit protein bL9 (150 aa).

Belongs to the bacterial ribosomal protein bL9 family.

Binds to the 23S rRNA. This is Large ribosomal subunit protein bL9 from Idiomarina loihiensis (strain ATCC BAA-735 / DSM 15497 / L2-TR).